Reading from the N-terminus, the 187-residue chain is MPEVERKPKITASRKLLLKSLMLAKAKECWEQEHEEREAEKVRYLAERIPTLQTRGLSLSALQDLCRELHAKVEVVDEERYDIEAKCLHNTREIKDLKLKVMDLRGKFKRPPLRRVRVSADAMLRALLGSKHKVSMDLRANLKSVKKEDTEKERPVEVGDWRKNVEAMSGMEGRKKMFDAAKSPTSQ.

P2 is subject to N-acetylproline. The tract at residues 2–48 (PEVERKPKITASRKLLLKSLMLAKAKECWEQEHEEREAEKVRYLAER) is involved in binding TNC. Position 58 is a phosphoserine (S58). The interval 97–118 (LKLKVMDLRGKFKRPPLRRVRV) is involved in binding TNC and actin.

Belongs to the troponin I family. Binds to actin and tropomyosin. In terms of tissue distribution, highest levels observed in human skeletal muscle (e.g. gastrocnemious muscle), differentiated cultures of primary human muscle cells and rhabdomyosarcoma cells cultured in low serum medium. Expressed in C2 muscle cell myoblasts and myotubes.

In terms of biological role, troponin I is the inhibitory subunit of troponin, the thin filament regulatory complex which confers calcium-sensitivity to striated muscle actomyosin ATPase activity. The protein is Troponin I, slow skeletal muscle (TNNI1) of Homo sapiens (Human).